The chain runs to 988 residues: MAEAFLQVLLENLTSFIGDKLVLIFGFEKECEKLSSVFSTIQAVLQDAQEKQLKDKAIENWLQKLNSAAYEVDDILGECKNEAIRFEQSRLGFYHPGIINFRHKIGRRMKEIMEKLDAISEERRKFHFLEKITERQAAAATRETGFVLTEPKVYGRDKEEDEIVKILINNVNVAEELPVFPIIGMGGLGKTTLAQMIFNDERVTKHFNPKIWVCVSDDFDEKRLIKTIIGNIERSSPHVEDLASFQKKLQELLNGKRYLLVLDDVWNDDLEKWAKLRAVLTVGARGASILATTRLEKVGSIMGTLQPYHLSNLSPHDSLLLFMQRAFGQQKEANPNLVAIGKEIVKKCGGVPLAAKTLGGLLRFKREESEWEHVRDNEIWSLPQDESSILPALRLSYHHLPLDLRQCFAYCAVFPKDTKMIKENLITLWMAHGFLLSKGNLELEDVGNEVWNELYLRSFFQEIEAKSGNTYFKIHDLIHDLATSLFSASASCGNIREINVKDYKHTVSIGFAAVVSSYSPSLLKKFVSLRVLNLSYSKLEQLPSSIGDLLHLRYLDLSCNNFRSLPERLCKLQNLQTLDVHNCYSLNCLPKQTSKLSSLRHLVVDGCPLTSTPPRIGLLTCLKTLGFFIVGSKKGYQLGELKNLNLCGSISITHLERVKNDTDAEANLSAKANLQSLSMSWDNDGPNRYESKEVKVLEALKPHPNLKYLEIIAFGGFRFPSWINHSVLEKVISVRIKSCKNCLCLPPFGELPCLENLELQNGSAEVEYVEEDDVHSRFSTRRSFPSLKKLRIWFFRSLKGLMKEEGEEKFPMLEEMAILYCPLFVFPTLSSVKKLEVHGNTNTRGLSSISNLSTLTSLRIGANYRATSLPEEMFTSLTNLEFLSFFDFKNLKDLPTSLTSLNALKRLQIESCDSLESFPEQGLEGLTSLTQLFVKYCKMLKCLPEGLQHLTALTNLGVSGCPEVEKRCDKEIGEDWHKIAHIPNLDIH.

The 303-residue stretch at 137–439 folds into the NB-ARC domain; the sequence is AAAATRETGF…MAHGFLLSKG (303 aa). 184-191 is a binding site for ATP; the sequence is GMGGLGKT. LRR repeat units follow at residues 526 to 548, 549 to 572, 574 to 595, 596 to 620, 638 to 662, 674 to 696, 751 to 776, 784 to 808, 829 to 851, 852 to 876, 878 to 900, 901 to 925, 927 to 950, and 966 to 988; these read FVSL…SIGD, LLHL…LCKL, NLQT…QTSK, LSSL…GLLT, LGEL…KNDT, LQSL…EVKV, LPCL…DVHS, FPSL…EGEE, LSSV…SISN, LSTL…MFTS, TNLE…SLTS, LNAL…GLEG, TSLT…LQHL, and KRCD…LDIH.

It belongs to the disease resistance NB-LRR family.

Disease resistance protein. Resistance proteins guard the plant against pathogens that contain an appropriate avirulence protein via a direct or indirect interaction with this avirulence protein. That triggers a defense system which restricts the pathogen growth. The polypeptide is Putative disease resistance protein RGA4 (RGA4) (Solanum bulbocastanum (Wild potato)).